A 234-amino-acid polypeptide reads, in one-letter code: Orotidine 5'-phosphate decarboxylase (234 aa).

Residues Asp14, Lys36, 63–72 (DMKLLDIDNT), Thr118, Arg179, Gln188, Gly208, and Arg209 each bind substrate. The Proton donor role is filled by Lys65.

The protein belongs to the OMP decarboxylase family. Type 1 subfamily. In terms of assembly, homodimer.

It carries out the reaction orotidine 5'-phosphate + H(+) = UMP + CO2. It functions in the pathway pyrimidine metabolism; UMP biosynthesis via de novo pathway; UMP from orotate: step 2/2. Functionally, catalyzes the decarboxylation of orotidine 5'-monophosphate (OMP) to uridine 5'-monophosphate (UMP). This Rhizobium meliloti (strain 1021) (Ensifer meliloti) protein is Orotidine 5'-phosphate decarboxylase.